We begin with the raw amino-acid sequence, 212 residues long: Uracil phosphoribosyltransferase (212 aa).

5-phospho-alpha-D-ribose 1-diphosphate-binding positions include R78, R103, and 130 to 138; that span reads DPMLATGSS. Residues I193 and 198 to 200 contribute to the uracil site; that span reads GDA. D199 contacts 5-phospho-alpha-D-ribose 1-diphosphate.

Belongs to the UPRTase family. Mg(2+) is required as a cofactor.

It carries out the reaction UMP + diphosphate = 5-phospho-alpha-D-ribose 1-diphosphate + uracil. The protein operates within pyrimidine metabolism; UMP biosynthesis via salvage pathway; UMP from uracil: step 1/1. With respect to regulation, allosterically activated by GTP. Its function is as follows. Catalyzes the conversion of uracil and 5-phospho-alpha-D-ribose 1-diphosphate (PRPP) to UMP and diphosphate. This Pseudomonas syringae pv. tomato (strain ATCC BAA-871 / DC3000) protein is Uracil phosphoribosyltransferase.